A 629-amino-acid polypeptide reads, in one-letter code: 1-deoxy-D-xylulose-5-phosphate synthase (629 aa).

Thiamine diphosphate contacts are provided by residues H79 and 119–121 (SHA). D150 contacts Mg(2+). Residues 151–152 (GS), N180, Y292, and E377 contribute to the thiamine diphosphate site. N180 provides a ligand contact to Mg(2+).

The protein belongs to the transketolase family. DXPS subfamily. In terms of assembly, homodimer. The cofactor is Mg(2+). Thiamine diphosphate is required as a cofactor.

It catalyses the reaction D-glyceraldehyde 3-phosphate + pyruvate + H(+) = 1-deoxy-D-xylulose 5-phosphate + CO2. It participates in metabolic intermediate biosynthesis; 1-deoxy-D-xylulose 5-phosphate biosynthesis; 1-deoxy-D-xylulose 5-phosphate from D-glyceraldehyde 3-phosphate and pyruvate: step 1/1. Its function is as follows. Catalyzes the acyloin condensation reaction between C atoms 2 and 3 of pyruvate and glyceraldehyde 3-phosphate to yield 1-deoxy-D-xylulose-5-phosphate (DXP). The protein is 1-deoxy-D-xylulose-5-phosphate synthase of Tropheryma whipplei (strain TW08/27) (Whipple's bacillus).